We begin with the raw amino-acid sequence, 427 residues long: Enolase (427 aa).

Gln-163 is a binding site for (2R)-2-phosphoglycerate. The active-site Proton donor is the Glu-205. Mg(2+) contacts are provided by Asp-242, Glu-285, and Asp-312. 4 residues coordinate (2R)-2-phosphoglycerate: Lys-337, Arg-366, Ser-367, and Lys-388. Lys-337 serves as the catalytic Proton acceptor.

This sequence belongs to the enolase family. Mg(2+) serves as cofactor.

It localises to the cytoplasm. The protein localises to the secreted. Its subcellular location is the cell surface. It carries out the reaction (2R)-2-phosphoglycerate = phosphoenolpyruvate + H2O. Its pathway is carbohydrate degradation; glycolysis; pyruvate from D-glyceraldehyde 3-phosphate: step 4/5. Functionally, catalyzes the reversible conversion of 2-phosphoglycerate (2-PG) into phosphoenolpyruvate (PEP). It is essential for the degradation of carbohydrates via glycolysis. This is Enolase from Burkholderia orbicola (strain MC0-3).